A 158-amino-acid polypeptide reads, in one-letter code: Snaclec alboaggregin-D subunit alpha (158 aa).

The N-terminal stretch at 1-23 (MGRFIFGSFGLLVVFLSLSGTGA) is a signal peptide. 3 disulfide bridges follow: Cys27/Cys38, Cys55/Cys152, and Cys127/Cys144. Residues 34 to 153 (YDRYCYQAFS…CAELNPFICK (120 aa)) enclose the C-type lectin domain.

Belongs to the snaclec family. Tetramer of heterodimers of alpha and beta subunits (alphabeta)(4); disulfide-linked. In terms of tissue distribution, expressed by the venom gland.

The protein resides in the secreted. In terms of biological role, snaclec that induces human platelet aggregation in the absence of any cofactor with the EC(50) of 0.25 nM and causes tyrosine phosphorylation in human platelets. Antibodies against either platelet GPIbalpha (GP1BA) or GPVI (GP6) inhibit alboaggregin D-induced platelet aggregation. Only the combination of these two antibodies completely inhibit aggregation, suggesting that it acts through both GPIbalpha (GP1BA) and GPVI (GP6). The protein is Snaclec alboaggregin-D subunit alpha of Trimeresurus albolabris (White-lipped pit viper).